Here is a 218-residue protein sequence, read N- to C-terminus: Large ribosomal subunit protein uL3 (218 aa).

Residues 134–154 form a disordered region; that stretch reads GRASHGNSRSHNVPGSIGMAQ. Gln154 is subject to N5-methylglutamine.

It belongs to the universal ribosomal protein uL3 family. As to quaternary structure, part of the 50S ribosomal subunit. Forms a cluster with proteins L14 and L19. Methylated by PrmB.

Functionally, one of the primary rRNA binding proteins, it binds directly near the 3'-end of the 23S rRNA, where it nucleates assembly of the 50S subunit. The protein is Large ribosomal subunit protein uL3 of Polynucleobacter necessarius subsp. necessarius (strain STIR1).